The following is a 312-amino-acid chain: Methionyl-tRNA formyltransferase (312 aa).

Position 109 to 112 (109 to 112 (SLLP)) interacts with (6S)-5,6,7,8-tetrahydrofolate.

The protein belongs to the Fmt family.

The enzyme catalyses L-methionyl-tRNA(fMet) + (6R)-10-formyltetrahydrofolate = N-formyl-L-methionyl-tRNA(fMet) + (6S)-5,6,7,8-tetrahydrofolate + H(+). Attaches a formyl group to the free amino group of methionyl-tRNA(fMet). The formyl group appears to play a dual role in the initiator identity of N-formylmethionyl-tRNA by promoting its recognition by IF2 and preventing the misappropriation of this tRNA by the elongation apparatus. The polypeptide is Methionyl-tRNA formyltransferase (Nitrosospira multiformis (strain ATCC 25196 / NCIMB 11849 / C 71)).